The following is a 504-amino-acid chain: Maturase K (504 aa).

This sequence belongs to the intron maturase 2 family. MatK subfamily.

The protein resides in the plastid. It localises to the chloroplast. Functionally, usually encoded in the trnK tRNA gene intron. Probably assists in splicing its own and other chloroplast group II introns. This is Maturase K from Capsella bursa-pastoris (Shepherd's purse).